We begin with the raw amino-acid sequence, 727 residues long: DNA topoisomerase 3 (727 aa).

Residues 3–136 (KTVVLAEKPS…IKRLWISSVT (134 aa)) enclose the Toprim domain. Positions 9 and 105 each coordinate Mg(2+). The Topo IA-type catalytic domain maps to 153–593 (YENLYHSAVA…DMKAYAHQTV (441 aa)). The tract at residues 187-192 (SCGRVQ) is interaction with DNA. The active-site O-(5'-phospho-DNA)-tyrosine intermediate is tyrosine 310. Over residues 685 to 699 (KRKNKDKARATKRDV) the composition is skewed to basic and acidic residues. Residues 685–714 (KRKNKDKARATKRDVSSYMKKQNKDEPINN) are disordered.

This sequence belongs to the type IA topoisomerase family. The cofactor is Mg(2+).

It carries out the reaction ATP-independent breakage of single-stranded DNA, followed by passage and rejoining.. Releases the supercoiling and torsional tension of DNA, which is introduced during the DNA replication and transcription, by transiently cleaving and rejoining one strand of the DNA duplex. Introduces a single-strand break via transesterification at a target site in duplex DNA. The scissile phosphodiester is attacked by the catalytic tyrosine of the enzyme, resulting in the formation of a DNA-(5'-phosphotyrosyl)-enzyme intermediate and the expulsion of a 3'-OH DNA strand. The free DNA strand then undergoes passage around the unbroken strand, thus removing DNA supercoils. Finally, in the religation step, the DNA 3'-OH attacks the covalent intermediate to expel the active-site tyrosine and restore the DNA phosphodiester backbone. The polypeptide is DNA topoisomerase 3 (Bacillus subtilis (strain 168)).